We begin with the raw amino-acid sequence, 266 residues long: Histidinol-phosphatase (266 aa).

Mg(2+) is bound by residues glutamate 69, aspartate 84, isoleucine 86, and aspartate 87. Glutamate 69 contributes to the substrate binding site. Residues 86-89, arginine 190, and aspartate 218 each bind substrate; that span reads IDGT. Aspartate 218 serves as a coordination point for Mg(2+).

The protein belongs to the inositol monophosphatase superfamily. Requires Mg(2+) as cofactor.

It carries out the reaction L-histidinol phosphate + H2O = L-histidinol + phosphate. It functions in the pathway amino-acid biosynthesis; L-histidine biosynthesis; L-histidine from 5-phospho-alpha-D-ribose 1-diphosphate: step 8/9. Functionally, catalyzes the dephosphorylation of histidinol-phosphate to histidinol, the direct precursor of histidine. The polypeptide is Histidinol-phosphatase (Streptomyces coelicolor (strain ATCC BAA-471 / A3(2) / M145)).